The chain runs to 356 residues: UDP-N-acetylglucosamine--N-acetylmuramyl-(pentapeptide) pyrophosphoryl-undecaprenol N-acetylglucosamine transferase (356 aa).

UDP-N-acetyl-alpha-D-glucosamine is bound by residues 12–14 (TGG), Asn124, Arg163, Ser188, Ile242, 261–266 (ALTVSE), and Gln287.

It belongs to the glycosyltransferase 28 family. MurG subfamily.

It localises to the cell inner membrane. It carries out the reaction di-trans,octa-cis-undecaprenyl diphospho-N-acetyl-alpha-D-muramoyl-L-alanyl-D-glutamyl-meso-2,6-diaminopimeloyl-D-alanyl-D-alanine + UDP-N-acetyl-alpha-D-glucosamine = di-trans,octa-cis-undecaprenyl diphospho-[N-acetyl-alpha-D-glucosaminyl-(1-&gt;4)]-N-acetyl-alpha-D-muramoyl-L-alanyl-D-glutamyl-meso-2,6-diaminopimeloyl-D-alanyl-D-alanine + UDP + H(+). The protein operates within cell wall biogenesis; peptidoglycan biosynthesis. In terms of biological role, cell wall formation. Catalyzes the transfer of a GlcNAc subunit on undecaprenyl-pyrophosphoryl-MurNAc-pentapeptide (lipid intermediate I) to form undecaprenyl-pyrophosphoryl-MurNAc-(pentapeptide)GlcNAc (lipid intermediate II). The sequence is that of UDP-N-acetylglucosamine--N-acetylmuramyl-(pentapeptide) pyrophosphoryl-undecaprenol N-acetylglucosamine transferase from Azotobacter vinelandii (strain DJ / ATCC BAA-1303).